The following is a 100-amino-acid chain: Osteocalcin (100 aa).

The signal sequence occupies residues 1–23 (MRALTLLALLALATLCITGQAGA). A propeptide spanning residues 24–51 (KPSGAESSKGAAFVSKQEGSEVVKRPRR) is cleaved from the precursor. Residues 52–98 (YLYQWLGAPAPYPDPLEPKREVCELNPDCDELADHIGFQEAYRRFYG) enclose the Gla domain. Pro60 carries the post-translational modification 4-hydroxyproline. Residues Glu68, Glu72, Glu75, and Asp81 each contribute to the Ca(2+) site. A 4-carboxyglutamate mark is found at Glu68, Glu72, and Glu75. Cys74 and Cys80 form a disulfide bridge.

Belongs to the osteocalcin/matrix Gla protein family. Gamma-carboxyglutamate residues are formed by vitamin K dependent carboxylation by GGCX. These residues are essential for the binding of calcium. Decarboxylation promotes the hormone activity.

The protein localises to the secreted. Functionally, the carboxylated form is one of the main organic components of the bone matrix, which constitutes 1-2% of the total bone protein: it acts as a negative regulator of bone formation and is required to limit bone formation without impairing bone resorption or mineralization. The carboxylated form binds strongly to apatite and calcium. The uncarboxylated form acts as a hormone secreted by osteoblasts, which regulates different cellular processes, such as energy metabolism, male fertility and brain development. Regulates of energy metabolism by acting as a hormone favoring pancreatic beta-cell proliferation, insulin secretion and sensitivity and energy expenditure. Uncarboxylated osteocalcin hormone also promotes testosterone production in the testes: acts as a ligand for G protein-coupled receptor GPRC6A at the surface of Leydig cells, initiating a signaling response that promotes the expression of enzymes required for testosterone synthesis in a CREB-dependent manner. Also acts as a regulator of brain development: osteocalcin hormone crosses the blood-brain barrier and acts as a ligand for GPR158 on neurons, initiating a signaling response that prevents neuronal apoptosis in the hippocampus, favors the synthesis of all monoamine neurotransmitters and inhibits that of gamma-aminobutyric acid (GABA). Osteocalcin also crosses the placenta during pregnancy and maternal osteocalcin is required for fetal brain development. This Macaca mulatta (Rhesus macaque) protein is Osteocalcin (BGLAP).